Consider the following 466-residue polypeptide: Cysteine--tRNA ligase (466 aa).

Zn(2+) is bound at residue Cys-27. Positions 29–39 match the 'HIGH' region motif; that stretch reads PTVYNYIHIGN. The Zn(2+) site is built by Cys-207, His-232, and Glu-236. A 'KMSKS' region motif is present at residues 264–268; sequence KMSKS. Lys-267 lines the ATP pocket.

It belongs to the class-I aminoacyl-tRNA synthetase family. In terms of assembly, monomer. Zn(2+) is required as a cofactor.

The protein localises to the cytoplasm. The enzyme catalyses tRNA(Cys) + L-cysteine + ATP = L-cysteinyl-tRNA(Cys) + AMP + diphosphate. This is Cysteine--tRNA ligase from Thermoanaerobacter pseudethanolicus (strain ATCC 33223 / 39E) (Clostridium thermohydrosulfuricum).